We begin with the raw amino-acid sequence, 126 residues long: Small ribosomal subunit protein uS11 (126 aa).

It belongs to the universal ribosomal protein uS11 family. In terms of assembly, part of the 30S ribosomal subunit.

Located on the platform of the 30S subunit. This chain is Small ribosomal subunit protein uS11, found in Methanosarcina barkeri (strain Fusaro / DSM 804).